The sequence spans 370 residues: Platelet-derived growth factor D (370 aa).

Positions Met1–Ala23 are cleaved as a signal peptide. Positions Arg52–Val170 constitute a CUB domain. A disulfide bridge connects residues Cys109 and Cys131. A glycan (N-linked (GlcNAc...) asparagine) is linked at Asn276. 2 disulfides stabilise this stretch: Cys302/Cys360 and Cys306/Cys362.

Belongs to the PDGF/VEGF growth factor family. As to quaternary structure, homodimer; disulfide-linked. Interacts with PDGFRB homodimers, and with heterodimers formed by PDGFRA and PDGFRB. Post-translationally, activated by proteolytic cleavage. Proteolytic removal of the N-terminal CUB domain releasing the core domain is necessary for unmasking the receptor-binding epitopes of the core domain. Cleavage after Arg-247 or Arg-249 by urokinase plasminogen activator gives rise to the active form. In terms of tissue distribution, widely expressed. Expressed at high levels in the kidney, adrenal glands, eye and CNS. In the kidney the localization is confined to arterial and arteriolar vascular smooth muscle cells and is also detected at low levels in the glomeruli In the eye in the anterior segment it is localized to the iris and ciliary body. In the retina localizes intensely to the outer plexiform layer, which contains photoreceptor axons and the synaptic layer between photoreceptors and second order neurons. In the spinal cord, prominently expressed in the motorneurons.

It localises to the secreted. Its function is as follows. Growth factor that plays an essential role in the regulation of embryonic development, cell proliferation, cell migration, survival and chemotaxis. Potent mitogen for cells of mesenchymal origin. Plays an important role in wound healing. Induces macrophage recruitment, increased interstitial pressure, and blood vessel maturation during angiogenesis. May play an important role in control of lens epithelial cell proliferation. Can initiate events that lead to a mesangial proliferative glomerulonephritis, including influx of monocytes and macrophages and production of extracellular matrix. This Rattus norvegicus (Rat) protein is Platelet-derived growth factor D (Pdgfd).